A 370-amino-acid polypeptide reads, in one-letter code: Putative F-box protein At1g46984 (370 aa).

The F-box domain maps to 18-64 (YTQLSTLPIDLIIEILSRLPMNSIAICRLVSKQWASILQSSDFTESF).

This is Putative F-box protein At1g46984 from Arabidopsis thaliana (Mouse-ear cress).